A 313-amino-acid polypeptide reads, in one-letter code: Protein FixB (313 aa).

Leu255 to Asp283 serves as a coordination point for FAD.

It belongs to the ETF alpha-subunit/FixB family. In terms of assembly, heterodimer of FixA and FixB.

Its pathway is amine and polyamine metabolism; carnitine metabolism. In terms of biological role, required for anaerobic carnitine reduction. May bring reductant to CaiA. This Escherichia coli O17:K52:H18 (strain UMN026 / ExPEC) protein is Protein FixB.